The primary structure comprises 364 residues: Histidinol-phosphate aminotransferase (364 aa).

Residue lysine 226 is modified to N6-(pyridoxal phosphate)lysine.

This sequence belongs to the class-II pyridoxal-phosphate-dependent aminotransferase family. Histidinol-phosphate aminotransferase subfamily. Homodimer. The cofactor is pyridoxal 5'-phosphate.

It carries out the reaction L-histidinol phosphate + 2-oxoglutarate = 3-(imidazol-4-yl)-2-oxopropyl phosphate + L-glutamate. It functions in the pathway amino-acid biosynthesis; L-histidine biosynthesis; L-histidine from 5-phospho-alpha-D-ribose 1-diphosphate: step 7/9. The sequence is that of Histidinol-phosphate aminotransferase from Campylobacter jejuni subsp. doylei (strain ATCC BAA-1458 / RM4099 / 269.97).